A 152-amino-acid chain; its full sequence is UPF0178 protein YaiI (152 aa).

This sequence belongs to the UPF0178 family.

In Escherichia coli O17:K52:H18 (strain UMN026 / ExPEC), this protein is UPF0178 protein YaiI.